A 226-amino-acid chain; its full sequence is Methylamine utilization ferredoxin-type protein MauM (226 aa).

4 consecutive 4Fe-4S ferredoxin-type domains span residues 59-87 (PEPE…LASW), 95-127 (TPYF…PLLT), 136-172 (VAVL…LKQI), and 180-211 (QIPT…LLPR). Residues Cys-67, Cys-70, Cys-73, Cys-77, Cys-105, Cys-108, Cys-113, Cys-117, Cys-145, Cys-153, Cys-156, Cys-160, Cys-189, Cys-192, Cys-195, and Cys-199 each contribute to the [4Fe-4S] cluster site.

The protein operates within one-carbon metabolism; methylamine degradation. Involved in electron transfer. The chain is Methylamine utilization ferredoxin-type protein MauM (mauM) from Methylophilus methylotrophus (Bacterium W3A1).